Here is a 336-residue protein sequence, read N- to C-terminus: 2-phospho-L-lactate transferase (336 aa).

D49 is a binding site for 7,8-didemethyl-8-hydroxy-5-deazariboflavin.

Belongs to the CofD family. As to quaternary structure, homodimer. Requires Mg(2+) as cofactor.

It catalyses the reaction (2S)-lactyl-2-diphospho-5'-guanosine + 7,8-didemethyl-8-hydroxy-5-deazariboflavin = oxidized coenzyme F420-0 + GMP + H(+). The protein operates within cofactor biosynthesis; coenzyme F420 biosynthesis. Its function is as follows. Catalyzes the transfer of the 2-phospholactate moiety from (2S)-lactyl-2-diphospho-5'-guanosine to 7,8-didemethyl-8-hydroxy-5-deazariboflavin (FO) with the formation of oxidized coenzyme F420-0 and GMP. In Halobacterium salinarum (strain ATCC 700922 / JCM 11081 / NRC-1) (Halobacterium halobium), this protein is 2-phospho-L-lactate transferase.